The primary structure comprises 760 residues: 5-methyltetrahydropteroyltriglutamate--homocysteine methyltransferase (760 aa).

5-methyltetrahydropteroyltri-L-glutamate is bound by residues 15–18 and lysine 114; that span reads RELK. L-homocysteine contacts are provided by residues 436-438 and glutamate 489; that span reads IGS. Residues 436–438 and glutamate 489 contribute to the L-methionine site; that span reads IGS. 5-methyltetrahydropteroyltri-L-glutamate-binding positions include 520–521 and tryptophan 566; that span reads RC. Aspartate 604 lines the L-homocysteine pocket. Position 604 (aspartate 604) interacts with L-methionine. Glutamate 610 contributes to the 5-methyltetrahydropteroyltri-L-glutamate binding site. Zn(2+) contacts are provided by histidine 646, cysteine 648, and glutamate 670. Residue histidine 699 is the Proton donor of the active site. A Zn(2+)-binding site is contributed by cysteine 731.

It belongs to the vitamin-B12 independent methionine synthase family. Requires Zn(2+) as cofactor.

It carries out the reaction 5-methyltetrahydropteroyltri-L-glutamate + L-homocysteine = tetrahydropteroyltri-L-glutamate + L-methionine. It functions in the pathway amino-acid biosynthesis; L-methionine biosynthesis via de novo pathway; L-methionine from L-homocysteine (MetE route): step 1/1. Its function is as follows. Catalyzes the transfer of a methyl group from 5-methyltetrahydrofolate to homocysteine resulting in methionine formation. This chain is 5-methyltetrahydropteroyltriglutamate--homocysteine methyltransferase, found in Shewanella oneidensis (strain ATCC 700550 / JCM 31522 / CIP 106686 / LMG 19005 / NCIMB 14063 / MR-1).